A 313-amino-acid chain; its full sequence is WD repeat-containing protein 82-A (313 aa).

WD repeat units lie at residues 19 to 58 (ENSD…PKRT), 105 to 144 (GHSK…CQGL), 146 to 184 (HLQG…KGPF), 192 to 231 (DRTC…VMHT), 236 to 276 (NNSK…KVAV), and 280 to 313 (KHTG…TIDD).

This sequence belongs to the WD repeat SWD2 family. In terms of assembly, component of the SET1/COMPASS complex. Component of the PNUTS-PP1 phosphatase complex.

The protein resides in the nucleus. Its subcellular location is the chromosome. It localises to the cytoplasm. Regulatory component of the SET1/COMPASS complex implicated in the tethering of this complex to transcriptional start sites of active genes. Facilitates histone H3 'Lys-4' methylation (H3K4me) via recruitment of the SETD1A or SETD1B to the 'Ser-5' phosphorylated C-terminal domain (CTD) of RNA polymerase II large subunit (POLR2A). Component of the PNUTS-PP1 protein phosphatase complex, a protein phosphatase 1 (PP1) complex that promotes RNA polymerase II transcription pause-release, allowing transcription elongation. This Xenopus laevis (African clawed frog) protein is WD repeat-containing protein 82-A (wdr82-a).